The chain runs to 219 residues: Multiple organellar RNA editing factor 2, chloroplastic (219 aa).

The N-terminal 48 residues, 1-48, are a transit peptide targeting the chloroplast; sequence MALPLSGTRHLTRALLSNVTLMAPPRIPSSVHYGGSRLGCSTRFFSIR. Residues 182–219 form a disordered region; it reads VQRSPERQRRVEPQPQRAQDRPRYNDRTRYSRRRENTR. The span at 185–219 shows a compositional bias: basic and acidic residues; it reads SPERQRRVEPQPQRAQDRPRYNDRTRYSRRRENTR.

The protein belongs to the MORF family. In terms of assembly, homodimer and heterodimer with MORF9. Interacts with protoporphyrinogen oxidase 1 PPOX1. Heterodimers with MORF8/RIP1 and MORF9/RIP9. Interacts with PCMP-A2/PMD1. Interacts with ORRM1. Interacts with ORRM6.

It is found in the plastid. The protein resides in the chloroplast. Functionally, involved in plastid rRNA processing and consequently in translation and early chloroplast differentiation. Involved in organellar RNA editing. Required for the processing of multiple editing sites in plastids. The chain is Multiple organellar RNA editing factor 2, chloroplastic from Arabidopsis thaliana (Mouse-ear cress).